A 220-amino-acid chain; its full sequence is Mediator of RNA polymerase II transcription subunit 19 (220 aa).

The tract at residues Ala-171 to Glu-220 is disordered. Residues Gly-178–Asn-189 are compositionally biased toward low complexity. The span at Ser-208–Glu-220 shows a compositional bias: basic and acidic residues.

This sequence belongs to the Mediator complex subunit 19 family. Component of the Mediator complex, which is composed of at least 21 subunits that form three structurally distinct submodules. The Mediator head module contains MED6, MED8, MED11, SRB4/MED17, SRB5/MED18, ROX3/MED19, SRB2/MED20 and SRB6/MED22, the middle module contains MED1, MED4, NUT1/MED5, MED7, CSE2/MED9, NUT2/MED10, SRB7/MED21 and SOH1/MED31, and the tail module contains MED2, PGD1/MED3, RGR1/MED14, GAL11/MED15 and SIN4/MED16. The head and the middle modules interact directly with RNA polymerase II, whereas the elongated tail module interacts with gene-specific regulatory proteins.

It is found in the nucleus. Its function is as follows. Component of the Mediator complex, a coactivator involved in the regulated transcription of nearly all RNA polymerase II-dependent genes. Mediator functions as a bridge to convey information from gene-specific regulatory proteins to the basal RNA polymerase II transcription machinery. The Mediator complex, having a compact conformation in its free form, is recruited to promoters by direct interactions with regulatory proteins and serves for the assembly of a functional preinitiation complex with RNA polymerase II and the general transcription factors. The Mediator complex unfolds to an extended conformation and partially surrounds RNA polymerase II, specifically interacting with the unphosphorylated form of the C-terminal domain (CTD) of RNA polymerase II. The Mediator complex dissociates from the RNA polymerase II holoenzyme and stays at the promoter when transcriptional elongation begins. The sequence is that of Mediator of RNA polymerase II transcription subunit 19 (ROX3) from Saccharomyces cerevisiae (strain ATCC 204508 / S288c) (Baker's yeast).